We begin with the raw amino-acid sequence, 106 residues long: uncharacterized protein (106 aa).

Disordered regions lie at residues 33 to 64 (FKTS…SRND) and 87 to 106 (NLTG…AVSK). Over residues 52-63 (DGKKQESLESRN) the composition is skewed to basic and acidic residues. Positions 87 to 99 (NLTGLESGGSSPP) are enriched in polar residues.

The protein localises to the mitochondrion. This is an uncharacterized protein from Arabidopsis thaliana (Mouse-ear cress).